The following is a 321-amino-acid chain: uncharacterized protein (321 aa).

This is an uncharacterized protein from Sinorhizobium fredii (strain NBRC 101917 / NGR234).